We begin with the raw amino-acid sequence, 1195 residues long: MTVMSLSRDLKDDFHSDTVLSILNEQRIRGILCDVTIIVEDTKFKAHSNVLAASSLYFKNIFWSHTICISSHVLELDDLKAEVFTEILNYIYSSTVVVKRQETVTDLAAAGKKLGISFLEDLTDRNFSNSPGPYVFCITEKGVVKEEKNEKRHEEPAITNGPRITNAFSIIETENSNNMFSPLDLRASFKKVSDSMRTASLCLERTDVCHEAEPVRTLAEHSYAVSSVAEAYRSQPVREHDGSSPGNTGKENCEALAAKPKTCRKPKTFSIPQDSDSATENIPPPPVSNLEVNQERSPQPAAVLTRSKSPNNEGDVHFSREDENQSSDVPGPPAAEVPPLVYNCSCCSKAFDSSTLLSAHMQLHKPTQEPLVCKYCNKQFTTLNRLDRHEQICMRSSHMPIPGGNQRFLENYPTIGQNGGSFTGPEPLLSENRIGEFSSTGSTLPDTDHMVKFVNGQMLYSCVVCKRSYVTLSSLRRHANVHSWRRTYPCHYCNKVFALAEYRTRHEIWHTGERRYQCIFCLETFMTYYILKNHQKSFHAIDHRLSISKKTANGGLKPSVYPYKLYRLLPMKCKRAPYKSYRNSSYENARENSQMNESAPGTYVVQNPHSSELPTLNFQDTVNTLTNSPAIPLETSACQDIPTSANVQNAEGTKWGEEALKMDLDNNFYSTEVSVSSTENAVSSDLRAGDVPVLSLSNSSENAASVISYSGSAPSVIVHSSQFSSVIMHSNAIAAMTSSNHRAFSDPAVSQSLKDDSKPEPDKVGRFASRPKSIKEKKKTTSHTRGEIPEESNYVADPGGSLSKTTNIAEETSKIETYIAKPALPGTSTNSNVAPLCQITVKIGNEAIVKRHILGSKLFYKRGRRPKYQMQEEPLPQGNDPEPSGDSPLGLCQSECMEMSEVFDDASDQDSTDKPWRPYYNYKPKKKSRQLKKMRKVNWRKEHGNRSPSHKCKYPAELDCAVGKAPQDKPFEEEETKEMPKLQCELCDGDKAVGAGNQGRPHRHLTSRPYACELCAKQFQSPSTLKMHMRCHTGEKPYQCKTCGRCFSVQGNLQKHERIHLGLKEFVCQYCNKAFTLNETLKIHERIHTGEKRYHCQFCFQRFLYLSTKRNHEQRHIREHNGKGYACFQCPKICKTAAALGMHQKKHLFKSPSQQEKIGDVCHENSNPLENQHFIGSEDNDQKDNIQTGVENVVL.

Positions 33–100 (CDVTIIVEDT…IYSSTVVVKR (68 aa)) constitute a BTB domain. Residue Lys-43 forms a Glycyl lysine isopeptide (Lys-Gly) (interchain with G-Cter in SUMO2) linkage. Residue Ser-130 is modified to Phosphoserine. Residues Lys-145, Lys-148, Lys-151, and Lys-259 each participate in a glycyl lysine isopeptide (Lys-Gly) (interchain with G-Cter in SUMO2) cross-link. The segment at 264–334 (RKPKTFSIPQ…QSSDVPGPPA (71 aa)) is disordered. Residues 270-280 (SIPQDSDSATE) show a composition bias toward polar residues. Residues 300–523 (PAAVLTRSKS…RRYQCIFCLE (224 aa)) form an interaction with CBFA2T3 region. Residue Ser-309 is modified to Phosphoserine. Over residues 314 to 323 (GDVHFSREDE) the composition is skewed to basic and acidic residues. A C2H2-type 1 zinc finger spans residues 342 to 364 (YNCSCCSKAFDSSTLLSAHMQLH). The segment at 371–395 (LVCKYCNKQFTTLNRLDRHEQICMR) adopts a C2H2-type 2; degenerate zinc-finger fold. 3 consecutive C2H2-type zinc fingers follow at residues 460 to 482 (YSCVVCKRSYVTLSSLRRHANVH), 488 to 510 (YPCHYCNKVFALAEYRTRHEIWH), and 516 to 539 (YQCIFCLETFMTYYILKNHQKSFH). Glycyl lysine isopeptide (Lys-Gly) (interchain with G-Cter in SUMO2) cross-links involve residues Lys-550, Lys-557, Lys-754, Lys-758, Lys-763, Lys-804, Lys-814, Lys-821, Lys-842, Lys-850, and Lys-857. The tract at residues 745-804 (SDPAVSQSLKDDSKPEPDKVGRFASRPKSIKEKKKTTSHTRGEIPEESNYVADPGGSLSK) is disordered. Residues 753 to 765 (LKDDSKPEPDKVG) are compositionally biased toward basic and acidic residues. Disordered regions lie at residues 871–891 (QEEPLPQGNDPEPSGDSPLGL) and 903–922 (FDDASDQDSTDKPWRPYYNY). Residues Lys-923, Lys-964, Lys-969, Lys-977, Lys-981, Lys-991, Lys-1017, and Lys-1026 each participate in a glycyl lysine isopeptide (Lys-Gly) (interchain with G-Cter in SUMO2) cross-link. 5 consecutive C2H2-type zinc fingers follow at residues 1010-1032 (YACELCAKQFQSPSTLKMHMRCH), 1038-1060 (YQCKTCGRCFSVQGNLQKHERIH), 1066-1088 (FVCQYCNKAFTLNETLKIHERIH), 1094-1116 (YHCQFCFQRFLYLSTKRNHEQRH), and 1125-1147 (YACFQCPKICKTAAALGMHQKKH). Residues Lys-1109, Lys-1132, Lys-1135, Lys-1150, and Lys-1183 each participate in a glycyl lysine isopeptide (Lys-Gly) (interchain with G-Cter in SUMO2) cross-link.

Interacts with CBFA2T3. Interacts with ZBTB4. Interacts with RBBP6. Post-translationally, ubiquitinated by RBBP6; leading to its degradation by the proteasome.

It is found in the nucleus. Its subcellular location is the chromosome. Transcriptional regulator with bimodal DNA-binding specificity. Binds with a higher affinity to methylated CpG dinucleotides in the consensus sequence 5'-CGCG-3' but can also bind to E-box elements (5'-CACGTG-3'). Can also bind specifically to a single methyl-CpG pair. Represses transcription in a methyl-CpG-dependent manner. Plays an important role in regulating DNA replication and common fragile sites (CFS) stability in a RBBP6- and MCM10-dependent manner; represses expression of MCM10 which plays an important role in DNA-replication. Acts as a transcriptional activator. May be involved in the differentiation and/or survival of late postmitotic neurons. This is Zinc finger and BTB domain-containing protein 38 from Homo sapiens (Human).